A 492-amino-acid chain; its full sequence is Cobyric acid synthase (492 aa).

The GATase cobBQ-type domain maps to 252 to 440 (RPKIAVLAYP…VHGLFADDHL (189 aa)). The active-site Nucleophile is Cys334. Residue His432 is part of the active site.

The protein belongs to the CobB/CobQ family. CobQ subfamily.

It participates in cofactor biosynthesis; adenosylcobalamin biosynthesis. Functionally, catalyzes amidations at positions B, D, E, and G on adenosylcobyrinic A,C-diamide. NH(2) groups are provided by glutamine, and one molecule of ATP is hydrogenolyzed for each amidation. This is Cobyric acid synthase from Bradyrhizobium sp. (strain BTAi1 / ATCC BAA-1182).